The sequence spans 375 residues: UDP-N-acetylglucosamine--N-acetylmuramyl-(pentapeptide) pyrophosphoryl-undecaprenol N-acetylglucosamine transferase (375 aa).

Residues 13–15 (TGG), N124, R165, S193, and Q294 contribute to the UDP-N-acetyl-alpha-D-glucosamine site.

The protein belongs to the glycosyltransferase 28 family. MurG subfamily.

The protein localises to the cell inner membrane. It carries out the reaction di-trans,octa-cis-undecaprenyl diphospho-N-acetyl-alpha-D-muramoyl-L-alanyl-D-glutamyl-meso-2,6-diaminopimeloyl-D-alanyl-D-alanine + UDP-N-acetyl-alpha-D-glucosamine = di-trans,octa-cis-undecaprenyl diphospho-[N-acetyl-alpha-D-glucosaminyl-(1-&gt;4)]-N-acetyl-alpha-D-muramoyl-L-alanyl-D-glutamyl-meso-2,6-diaminopimeloyl-D-alanyl-D-alanine + UDP + H(+). Its pathway is cell wall biogenesis; peptidoglycan biosynthesis. Cell wall formation. Catalyzes the transfer of a GlcNAc subunit on undecaprenyl-pyrophosphoryl-MurNAc-pentapeptide (lipid intermediate I) to form undecaprenyl-pyrophosphoryl-MurNAc-(pentapeptide)GlcNAc (lipid intermediate II). The sequence is that of UDP-N-acetylglucosamine--N-acetylmuramyl-(pentapeptide) pyrophosphoryl-undecaprenol N-acetylglucosamine transferase from Mesorhizobium japonicum (strain LMG 29417 / CECT 9101 / MAFF 303099) (Mesorhizobium loti (strain MAFF 303099)).